The following is a 133-amino-acid chain: MDPEYSELFERLNKQLDNVEDVLKPLKDAESIFELAEGKSELEQAKLYITMSYAINSTLYSFYKLNGIDASERPVMQELQRVKNYISKIQQAEKNVNPKTEAVNTSNAAISSSSSNRPKVAKDAATRIIKHHT.

Positions V96–T133 are disordered. Residues A102–N116 are compositionally biased toward low complexity.

Belongs to the C1D family. In terms of assembly, component of the exosome multienzyme ribonuclease complex. Interacts with cut3.

It localises to the cytoplasm. It is found in the nucleus. Required for exosome-dependent processing of pre-rRNA and small nucleolar RNA (snRNA) precursors. Involved in processing of 35S pre-rRNA at the A0, A1 and A2 sites. This is Exosome complex protein C1739.07 from Schizosaccharomyces pombe (strain 972 / ATCC 24843) (Fission yeast).